We begin with the raw amino-acid sequence, 790 residues long: E3 ubiquitin-protein ligase Jade-2 (790 aa).

Disordered stretches follow at residues 1–52 (MEEK…PSEV) and 111–130 (GPPA…SQPD). Residues Ser-9 and Ser-15 each carry the phosphoserine modification. Residues 9-28 (SISSDNSDTTDSHATSTSAS) are compositionally biased toward low complexity. Lys-32 and Lys-38 each carry N6-acetyllysine. Phosphoserine is present on Ser-117. The PHD-type 1 zinc finger occupies 199–249 (DVVCDVCRSPEGEDGNEMVFCDKCNVCVHQACYGILKVPTGSWLCRTCALG). The segment at 251–285 (QPKCLLCPKRGGALKPTRSGTKWVHVSCALWIPEV) adopts a C2HC pre-PHD-type zinc-finger fold. Lys-298 carries the post-translational modification N6-acetyllysine. The PHD-type 2 zinc-finger motif lies at 309–365 (LSCSLCKECTGTCIQCSMPSCVTAFHVTCAFDHGLEMRTILADNDEVKFKSFCQEHS). 2 disordered regions span residues 361–386 (CQEH…AGED) and 578–777 (SFMR…PREA). Polar residues predominate over residues 372–381 (EPTSEPTEPS). Basic residues predominate over residues 593–606 (KARGRTRLPAKKKP). Residues 684–693 (AASVAADSDV) show a composition bias toward low complexity. Over residues 737–747 (ERPKVSLHFDT) the composition is skewed to basic and acidic residues. A compositionally biased stretch (acidic residues) spans 757–767 (EMSDSDVEAED).

Belongs to the JADE family. In terms of assembly, component of the HBO1 complex composed at least of ING4 or ING5, MYST2/HBO1, MEAF6, and one of JADE1, JADE2 and JADE3. Interacts (via C-terminus) with KDM1A (via AOD/Tower domain).

It catalyses the reaction S-ubiquitinyl-[E2 ubiquitin-conjugating enzyme]-L-cysteine + [acceptor protein]-L-lysine = [E2 ubiquitin-conjugating enzyme]-L-cysteine + N(6)-ubiquitinyl-[acceptor protein]-L-lysine.. It functions in the pathway protein modification; protein ubiquitination. In terms of biological role, scaffold subunit of some HBO1 complexes, which have a histone H4 acetyltransferase activity. Acts as an E3 ubiquitin-protein ligase mediating the ubiquitination and subsequent proteasomal degradation of target protein histone demethylase KDM1A. Also acts as a ubiquitin ligase E3 toward itself. Positive regulator of neurogenesis. The chain is E3 ubiquitin-protein ligase Jade-2 (JADE2) from Homo sapiens (Human).